A 29-amino-acid chain; its full sequence is Brevinin-2Ra (29 aa).

A disulfide bond links Cys-23 and Cys-29.

Expressed by the skin glands.

It localises to the secreted. Its function is as follows. Antimicrobial peptide. This is Brevinin-2Ra from Pelophylax ridibundus (Marsh frog).